We begin with the raw amino-acid sequence, 163 residues long: Jun dimerization protein 2 (163 aa).

Disordered regions lie at residues M1 to G20 and K59 to C89. K65 participates in a covalent cross-link: Glycyl lysine isopeptide (Lys-Gly) (interchain with G-Cter in SUMO2). Residues E72–H135 form the bZIP domain. A basic motif region spans residues R74 to R96. The segment at L100 to L128 is leucine-zipper. Position 148 is a phosphothreonine; by MAPK8 (T148).

This sequence belongs to the bZIP family. ATF subfamily. Forms a homodimer or heterodimer with JUN, JUNB, JUND, CEBPG and ATF2 thereby inhibiting transactivation by JUN, ATF2 and CEBPG. Binds multiple DNA elements such as cAMP-response element (CRE) and TPA response element (TRE) either as homodimer or heterodimer. Interacts with IRF2BP1. In terms of processing, phosphorylation of Thr-148 by MAPK8 in response to different stress conditions such as, UV irradiation, oxidatives stress and anisomycin treatments. Polyubiquitinated; probably by IRF2BP1. As to expression, ubiquitously expressed in all adult tissues tested as well in embryos.

The protein resides in the nucleus. Its function is as follows. Component of the AP-1 transcription factor that represses transactivation mediated by the Jun family of proteins. Involved in a variety of transcriptional responses associated with AP-1, such as UV-induced apoptosis, cell differentiation, tumorigenesis and antitumogeneris. Can also function as a repressor by recruiting histone deacetylase 3/HDAC3 to the promoter region of JUN. May control transcription via direct regulation of the modification of histones and the assembly of chromatin. The chain is Jun dimerization protein 2 (Jdp2) from Mus musculus (Mouse).